A 39-amino-acid chain; its full sequence is Natriuretic peptide PaNP-d (39 aa).

Positions 1–8 (SGSKTAEI) are excised as a propeptide. The interval 1 to 39 (SGSKTAEIDDGCFGLPLDPIGSTSGMGCRSVPKPIPGGS) is disordered. Cys-12 and Cys-28 are joined by a disulfide.

The protein belongs to the natriuretic peptide family. In terms of tissue distribution, expressed by the venom gland.

It localises to the secreted. Snake venom natriuretic peptide that targets both NPR1 and NPR2. Exhibits hypotensive and vasodepressor activities. This Pseudechis australis (Mulga snake) protein is Natriuretic peptide PaNP-d.